Here is a 272-residue protein sequence, read N- to C-terminus: Glutamate 5-kinase (272 aa).

Lys-15 provides a ligand contact to ATP. Substrate is bound by residues Ser-55, Asp-142, and Asn-158. Residues 178 to 179 (SD) and 220 to 226 (TGGMLSK) contribute to the ATP site.

It belongs to the glutamate 5-kinase family.

Its subcellular location is the cytoplasm. It catalyses the reaction L-glutamate + ATP = L-glutamyl 5-phosphate + ADP. Its pathway is amino-acid biosynthesis; L-proline biosynthesis; L-glutamate 5-semialdehyde from L-glutamate: step 1/2. In terms of biological role, catalyzes the transfer of a phosphate group to glutamate to form L-glutamate 5-phosphate. This is Glutamate 5-kinase from Streptococcus equi subsp. zooepidemicus (strain H70).